The following is a 135-amino-acid chain: MTVNIYGASCSSTRKARQWFKKHGIAYKERNILRQPLTINELQEILRMTVEGTDEIISTRSKIFKELNLNLDELPLQKLLELIHEHPRLLKSPILMDEKRFQVGYHEDDIRQFLPRKTREHLWLQWKLDLGLVKG.

Cys-10 is a catalytic residue.

It belongs to the ArsC family. Spx subfamily. Interacts with the C-terminal domain of the alpha subunit of the RNAP.

The protein resides in the cytoplasm. In terms of biological role, global transcriptional regulator that plays a key role in stress response and exerts either positive or negative regulation of genes. Acts by interacting with the C-terminal domain of the alpha subunit of the RNA polymerase (RNAP). This interaction can enhance binding of RNAP to the promoter region of target genes and stimulate their transcription, or block interaction of RNAP with activator. This is Global transcriptional regulator Spx 2 from Oceanobacillus iheyensis (strain DSM 14371 / CIP 107618 / JCM 11309 / KCTC 3954 / HTE831).